We begin with the raw amino-acid sequence, 449 residues long: Gamma-glutamyl phosphate reductase (449 aa).

The protein belongs to the gamma-glutamyl phosphate reductase family.

The protein localises to the cytoplasm. The enzyme catalyses L-glutamate 5-semialdehyde + phosphate + NADP(+) = L-glutamyl 5-phosphate + NADPH + H(+). Its pathway is amino-acid biosynthesis; L-proline biosynthesis; L-glutamate 5-semialdehyde from L-glutamate: step 2/2. In terms of biological role, catalyzes the NADPH-dependent reduction of L-glutamate 5-phosphate into L-glutamate 5-semialdehyde and phosphate. The product spontaneously undergoes cyclization to form 1-pyrroline-5-carboxylate. The chain is Gamma-glutamyl phosphate reductase from Methanococcoides burtonii (strain DSM 6242 / NBRC 107633 / OCM 468 / ACE-M).